The chain runs to 311 residues: Porphobilinogen deaminase (311 aa).

S-(dipyrrolylmethanemethyl)cysteine is present on Cys243.

The protein belongs to the HMBS family. As to quaternary structure, monomer. It depends on dipyrromethane as a cofactor.

It catalyses the reaction 4 porphobilinogen + H2O = hydroxymethylbilane + 4 NH4(+). Its pathway is porphyrin-containing compound metabolism; protoporphyrin-IX biosynthesis; coproporphyrinogen-III from 5-aminolevulinate: step 2/4. Tetrapolymerization of the monopyrrole PBG into the hydroxymethylbilane pre-uroporphyrinogen in several discrete steps. This is Porphobilinogen deaminase from Aliivibrio salmonicida (strain LFI1238) (Vibrio salmonicida (strain LFI1238)).